The sequence spans 169 residues: Spore protein SP21 (169 aa).

2 disordered regions span residues 1–21 (MADL…REWD) and 150–169 (QPKR…HIKA). The sHSP domain maps to 47 to 159 (QGPPAFVPAF…QPKRIQVASS (113 aa)).

This sequence belongs to the small heat shock protein (HSP20) family.

May stabilize cellular components during stress and spore formation. In Stigmatella aurantiaca (strain DW4/3-1), this protein is Spore protein SP21 (hspA).